A 402-amino-acid polypeptide reads, in one-letter code: Bacteriochlorophyllide c C-7(1)-hydroxylase (402 aa).

Positions 104–359 (VIGMNQDIIN…IKYQDRFDMP (256 aa)) constitute a Radical SAM core domain. Residues Cys-120, Cys-129, and Cys-132 each coordinate [4Fe-4S] cluster.

This sequence belongs to the radical SAM superfamily. The cofactor is [4Fe-4S] cluster.

The catalysed reaction is a bacteriochlorophyllide c + 2 S-adenosyl-L-methionine + H2O = a bacteriochlorophyllide e + 2 5'-deoxyadenosine + 2 L-methionine + 2 H(+). It carries out the reaction a bacteriochlorophyllide d + 2 S-adenosyl-L-methionine + H2O = a bacteriochlorophyllide f + 2 5'-deoxyadenosine + 2 L-methionine + 2 H(+). The protein operates within porphyrin-containing compound metabolism; bacteriochlorophyll biosynthesis. In terms of biological role, involved in the biosynthesis of bacteriochlorophyll e (BChl e). Catalyzes two consecutive hydroxylation reactions of the C-7 methyl group of bacteriochlorophyllide c (BChlide c) to form a geminal diol intermediate that spontaneously dehydrates to produce the formyl group of bacteriochlorophyllide e (BChlide e). Also able to catalyze the same reaction for bacteriochlorophyllide d (BChlide d) to give rise to bacteriochlorophyllide f (BChlide f). The protein is Bacteriochlorophyllide c C-7(1)-hydroxylase of Chlorobaculum limnaeum.